We begin with the raw amino-acid sequence, 192 residues long: uncharacterized protein (192 aa).

Residues 29 to 160 (QRQAAVLIPV…PLDVYRRGNS (132 aa)) form the Nudix hydrolase domain. Positions 67–89 (GAVDSTDASLIAAALREAQEEVA) match the Nudix box motif. Mg(2+) contacts are provided by E83 and E87.

It belongs to the Nudix hydrolase family. PCD1 subfamily. Mn(2+) serves as cofactor. It depends on Mg(2+) as a cofactor.

In terms of biological role, probably mediates the hydrolysis of some nucleoside diphosphate derivatives. This is an uncharacterized protein from Salmonella newport (strain SL254).